A 539-amino-acid polypeptide reads, in one-letter code: Effector protein hopAB1 (539 aa).

Disordered stretches follow at residues 1–93 (MPGI…PEAQ), 163–220 (QTVR…RHPQ), 230–249 (ASAARHNHSANQTNEALRRL), and 315–336 (RQTTTNSPELPPLASSAESGRR). The span at 18-31 (TDGEPVTEREHDSS) shows a compositional bias: basic and acidic residues. Over residues 181–194 (SSSGSSQRSLIGRS) the composition is skewed to low complexity.

It belongs to the HopAB family.

It localises to the secreted. Functionally, effector protein that plays different roles depending on the species and plant cultivars that interact with the pathogen. Acts as a virulence determinant by enhancing the development of disease symptoms and bacterial growth. Acts as an avirulence factor by eliciting hypersensitive response (HR) and plant resistance. This is Effector protein hopAB1 (hopAB1) from Pseudomonas savastanoi pv. phaseolicola (strain 1448A / Race 6) (Pseudomonas syringae pv. phaseolicola (strain 1448A / Race 6)).